We begin with the raw amino-acid sequence, 285 residues long: uncharacterized protein (285 aa).

The signal sequence occupies residues 1-25; sequence MVKKWLIQFAVMLSVLSTFTYSASA.

This is an uncharacterized protein from Bacillus subtilis (strain 168).